A 413-amino-acid polypeptide reads, in one-letter code: Protein arginine N-methyltransferase 2 (413 aa).

Disordered regions lie at residues 65–85 (DDEEPNGVQTNGEQGDEQKSV) and 148–178 (ELEDDDEEEEEGQEEQTGTEEVEVEGESAPQ). Over residues 148-173 (ELEDDDEEEEEGQEEQTGTEEVEVEG) the composition is skewed to acidic residues. One can recognise an RMT2 domain in the interval 192–413 (TGPDVTNSRY…YRLPLCKYMD (222 aa)). Residues Tyr201, Met230, 250-255 (HGMGIV), 271-273 (EAH), 298-299 (WQ), and Asp318 each bind S-adenosyl-L-methionine.

It belongs to the class I-like SAM-binding methyltransferase superfamily. RMT2 methyltransferase family. As to quaternary structure, monomer.

It is found in the cytoplasm. The protein resides in the nucleus. In terms of biological role, S-adenosyl-L-methionine-dependent protein-arginine N-methyltransferase that methylates the delta-nitrogen atom of arginine residues to form N5-methylarginine (type IV) in target proteins. Monomethylates ribosomal protein L12. The protein is Protein arginine N-methyltransferase 2 of Aspergillus oryzae (strain ATCC 42149 / RIB 40) (Yellow koji mold).